A 483-amino-acid chain; its full sequence is Putative (R)-citramalate synthase CimA (483 aa).

A Pyruvate carboxyltransferase domain is found at 1–245 (MRDGEQTPGV…DTGIKHEQIY (245 aa)).

The protein belongs to the alpha-IPM synthase/homocitrate synthase family. As to quaternary structure, homodimer.

The catalysed reaction is pyruvate + acetyl-CoA + H2O = (3R)-citramalate + CoA + H(+). Its pathway is amino-acid biosynthesis; L-isoleucine biosynthesis; 2-oxobutanoate from pyruvate: step 1/3. Catalyzes the condensation of pyruvate and acetyl-coenzyme A to form (R)-citramalate. This is Putative (R)-citramalate synthase CimA from Methanosarcina mazei (strain ATCC BAA-159 / DSM 3647 / Goe1 / Go1 / JCM 11833 / OCM 88) (Methanosarcina frisia).